We begin with the raw amino-acid sequence, 331 residues long: Glyceraldehyde-3-phosphate dehydrogenase 2 (331 aa).

NAD(+) is bound by residues 11 to 12 (RI), Asp-33, and Arg-78. D-glyceraldehyde 3-phosphate is bound by residues 148 to 150 (SCT), Thr-179, 208 to 209 (TG), and Arg-231. Cys-149 (nucleophile) is an active-site residue. Asn-313 provides a ligand contact to NAD(+).

This sequence belongs to the glyceraldehyde-3-phosphate dehydrogenase family. As to quaternary structure, homotetramer.

Its subcellular location is the cytoplasm. It carries out the reaction D-glyceraldehyde 3-phosphate + phosphate + NAD(+) = (2R)-3-phospho-glyceroyl phosphate + NADH + H(+). Its pathway is carbohydrate degradation; glycolysis; pyruvate from D-glyceraldehyde 3-phosphate: step 1/5. In Kluyveromyces marxianus (Yeast), this protein is Glyceraldehyde-3-phosphate dehydrogenase 2 (GAP2).